A 165-amino-acid polypeptide reads, in one-letter code: Disulfide bond formation protein B (165 aa).

Residues 1–16 (MTILNSLNQFSKGRLS) are Cytoplasmic-facing. A helical transmembrane segment spans residues 17 to 33 (WLLLLLFVVFFEACALY). Topologically, residues 34-51 (FQHVMMLAPCVMCIYERV) are periplasmic. A disulfide bridge connects residues cysteine 43 and cysteine 46. The helical transmembrane segment at 52-67 (AMMGVGVAAIVGLMAP) threads the bilayer. Topologically, residues 68-74 (NNPIFRW) are cytoplasmic. Residues 75-92 (LGLIGWGLSSYKGLLLAQ) form a helical membrane-spanning segment. Residues 93–147 (QHVDYQFNPSPFATCDLFVTFPSWRPLNQWAPWIFEAYGDCSKIVWQFLDLSMPQ) lie on the Periplasmic side of the membrane. Residues cysteine 107 and cysteine 133 are joined by a disulfide bond. A helical transmembrane segment spans residues 148-165 (WLVVIFAGNLIALALIVI).

It belongs to the DsbB family.

It localises to the cell inner membrane. Its function is as follows. Required for disulfide bond formation in some periplasmic proteins. Acts by oxidizing the DsbA protein. This is Disulfide bond formation protein B from Vibrio alginolyticus.